Consider the following 313-residue polypeptide: Olfactory receptor 2B6 (313 aa).

Over 1–25 (MNWVNDSIIQEFILLGFSDRPWLEF) the chain is Extracellular. N-linked (GlcNAc...) asparagine glycosylation occurs at Asn5. A helical membrane pass occupies residues 26–49 (PLLVVFLISYTVTIFGNLTIILVS). At 50–57 (RLDTKLHT) the chain is on the cytoplasmic side. Residues 58–79 (PMYFFLTNLSLLDLCYTTCTVP) form a helical membrane-spanning segment. Residues 80-100 (QMLVNLCSIRKVISYRGCVAQ) lie on the Extracellular side of the membrane. A disulfide bridge links Cys97 with Cys189. The chain crosses the membrane as a helical span at residues 101–120 (LFIFLALGATEYLLLAVMSF). Residues 121–139 (DRFVAICRPLHYSVIMHQR) lie on the Cytoplasmic side of the membrane. A helical membrane pass occupies residues 140 to 158 (LCLQLAAASWVTGFSNSVW). Residues 159–195 (LSTLTLQLPLCDPYVIDHFLCEVPALLKLSCVETTAN) lie on the Extracellular side of the membrane. Residues 196 to 219 (EAELFLVSELFHLIPLTLILISYA) traverse the membrane as a helical segment. At 220–236 (FIVRAVLRIQSAEGRQK) the chain is on the cytoplasmic side. A helical membrane pass occupies residues 237–259 (AFGTCGSHLIVVSLFYSTAVSVY). At 260–272 (LQPPSPSSKDQGK) the chain is on the extracellular side. Residues 273 to 292 (MVSLFYGIIAPMLNPLIYTL) traverse the membrane as a helical segment. Residues 293–313 (RNKEVKEGFKRLVARVFLIKK) are Cytoplasmic-facing.

It belongs to the G-protein coupled receptor 1 family.

The protein localises to the cell membrane. Odorant receptor. This chain is Olfactory receptor 2B6, found in Homo sapiens (Human).